A 214-amino-acid polypeptide reads, in one-letter code: Transmembrane emp24 domain-containing protein p24delta10 (214 aa).

An N-terminal signal peptide occupies residues 1 to 24; it reads MFLQSQKLWTMLLILAIWSPISHS. The Lumenal segment spans residues 25–181; sequence LHFDLHSGRT…QDLNRSTNTK (157 aa). The 116-residue stretch at 34 to 149 folds into the GOLD domain; that stretch reads TKCIAEDIKS…VEVMEFEVKS (116 aa). A coiled-coil region spans residues 164–177; sequence LRDREEEMQDLNRS. Arg-167 is subject to Omega-N-methylated arginine. The N-linked (GlcNAc...) asparagine glycan is linked to Asn-175. A helical transmembrane segment spans residues 182-202; the sequence is MAWLSVLSFFVCIGVAGMQFL. Residues 203 to 214 lie on the Cytoplasmic side of the membrane; that stretch reads HLKTFFEKKKVI. Residues 207–208 carry the COPII vesicle coat-binding motif; that stretch reads FF. The COPI vesicle coat-binding signature appears at 207–214; that stretch reads FFEKKKVI.

It belongs to the EMP24/GP25L family. As to quaternary structure, probably oligomerizes with other members of the EMP24/GP25L family. Associates with the COPI vesicle coat (coatomer). Associates with the COPII vesicle coat (coatomer).

The protein resides in the endoplasmic reticulum membrane. The protein localises to the golgi apparatus. Its subcellular location is the cis-Golgi network membrane. It localises to the golgi stack membrane. Its function is as follows. Involved in vesicular protein trafficking. Mainly functions in the early secretory pathway. Thought to act as cargo receptor at the lumenal side for incorporation of secretory cargo molecules into transport vesicles and to be involved in vesicle coat formation at the cytoplasmic side. This chain is Transmembrane emp24 domain-containing protein p24delta10, found in Arabidopsis thaliana (Mouse-ear cress).